Here is a 445-residue protein sequence, read N- to C-terminus: Trigger factor (445 aa).

The PPIase FKBP-type domain occupies 172–257 (GDQVVINFVG…VKSVNWAHLP (86 aa)).

This sequence belongs to the FKBP-type PPIase family. Tig subfamily.

The protein resides in the cytoplasm. It catalyses the reaction [protein]-peptidylproline (omega=180) = [protein]-peptidylproline (omega=0). In terms of biological role, involved in protein export. Acts as a chaperone by maintaining the newly synthesized protein in an open conformation. Functions as a peptidyl-prolyl cis-trans isomerase. In Polynucleobacter necessarius subsp. necessarius (strain STIR1), this protein is Trigger factor.